The chain runs to 311 residues: Protoheme IX farnesyltransferase (311 aa).

Transmembrane regions (helical) follow at residues 32 to 52 (VMSL…VSIN), 53 to 73 (PWYG…AGVL), 104 to 124 (FVFG…FINW), 125 to 145 (FAAL…TIWL), 153 to 173 (IVIG…AATG), 180 to 200 (FLLF…LSLF), 224 to 244 (KQIL…FIID), 245 to 265 (FAGI…IYFA), and 290 to 310 (FYLA…YFII).

Belongs to the UbiA prenyltransferase family. Protoheme IX farnesyltransferase subfamily.

The protein resides in the cell inner membrane. It carries out the reaction heme b + (2E,6E)-farnesyl diphosphate + H2O = Fe(II)-heme o + diphosphate. It participates in porphyrin-containing compound metabolism; heme O biosynthesis; heme O from protoheme: step 1/1. Its function is as follows. Converts heme B (protoheme IX) to heme O by substitution of the vinyl group on carbon 2 of heme B porphyrin ring with a hydroxyethyl farnesyl side group. The protein is Protoheme IX farnesyltransferase of Bartonella quintana (strain Toulouse) (Rochalimaea quintana).